The following is a 266-amino-acid chain: Mitochondrial intermembrane space import and assembly protein 40 (266 aa).

The transit peptide at 1–28 (MFRQVSVRALRRAAGRSVCASRAQMVRH) directs the protein to the mitochondrion. Residues 29–44 (SSTLGGGKGSYNLDMP) lie on the Mitochondrial matrix side of the membrane. Residues 45 to 61 (ALALAAGVTLLAGYMVY) traverse the membrane as a helical; Signal-anchor for type II membrane protein segment. The Mitochondrial intermembrane segment spans residues 62–266 (PRAPKAKQAA…AESAKSDEGH (205 aa)). Residues 87 to 98 (ASLQASAPVQAT) show a composition bias toward polar residues. The segment at 87-180 (ASLQASAPVQ…GQQGAYNPDT (94 aa)) is disordered. Composition is skewed to low complexity over residues 130-157 (AEVGETQAEQAPAVETEQAAEAEQAAEA) and 165-175 (AGEAAQGQQGA). Intrachain disulfides connect Cys-187–Cys-189, Cys-198–Cys-231, and Cys-208–Cys-221. The region spanning 195–239 (HGPCGEEFKAAFACFVYSEAEPKGIDCVEKFQVMQDCFRQHPEHY) is the CHCH domain. 2 consecutive short sequence motifs (cx9C motif) follow at residues 198–208 (CGEEFKAAFAC) and 221–231 (CVEKFQVMQDC). Residues 242–266 (QLESEEQAVRETEAAAESAKSDEGH) are disordered. The span at 248–266 (QAVRETEAAAESAKSDEGH) shows a compositional bias: basic and acidic residues.

As to quaternary structure, monomer. Cu(2+) serves as cofactor. Zn(2+) is required as a cofactor.

Its subcellular location is the mitochondrion inner membrane. Its function is as follows. Required for the import and folding of small cysteine-containing proteins (small Tim) in the mitochondrial intermembrane space (IMS). Forms a redox cycle with ERV1 that involves a disulfide relay system. Precursor proteins to be imported into the IMS are translocated in their reduced form into the mitochondria. The oxidized form of MIA40 forms a transient intermolecular disulfide bridge with the reduced precursor protein, resulting in oxidation of the precursor protein that now contains an intramolecular disulfide bond and is able to undergo folding in the IMS. This chain is Mitochondrial intermembrane space import and assembly protein 40 (MIA40), found in Eremothecium gossypii (strain ATCC 10895 / CBS 109.51 / FGSC 9923 / NRRL Y-1056) (Yeast).